A 224-amino-acid polypeptide reads, in one-letter code: DNA mismatch repair protein MutH (224 aa).

It belongs to the MutH family.

It localises to the cytoplasm. Functionally, sequence-specific endonuclease that cleaves unmethylated GATC sequences. It is involved in DNA mismatch repair. The protein is DNA mismatch repair protein MutH of Histophilus somni (strain 2336) (Haemophilus somnus).